The following is a 708-amino-acid chain: Elongation factor G 1 (708 aa).

Positions 9 to 295 constitute a tr-type G domain; the sequence is AKVRNIGIMA…AVVRYLPTPL (287 aa). GTP contacts are provided by residues 18 to 25, 86 to 90, and 140 to 143; these read AHIDAGKT, DTPGH, and NKLD.

This sequence belongs to the TRAFAC class translation factor GTPase superfamily. Classic translation factor GTPase family. EF-G/EF-2 subfamily.

It localises to the cytoplasm. Its function is as follows. Catalyzes the GTP-dependent ribosomal translocation step during translation elongation. During this step, the ribosome changes from the pre-translocational (PRE) to the post-translocational (POST) state as the newly formed A-site-bound peptidyl-tRNA and P-site-bound deacylated tRNA move to the P and E sites, respectively. Catalyzes the coordinated movement of the two tRNA molecules, the mRNA and conformational changes in the ribosome. The polypeptide is Elongation factor G 1 (fusA) (Streptomyces coelicolor (strain ATCC BAA-471 / A3(2) / M145)).